Here is a 472-residue protein sequence, read N- to C-terminus: Tyrosine--tRNA ligase, mitochondrial (472 aa).

Y72 lines the L-tyrosine pocket. D76 lines the ATP pocket. The short motif at 77–86 (PTGDSLHVGH) is the 'HIGH' region element. Residues D116, Y216, Q220, D223, and Q242 each coordinate L-tyrosine. Positions 269 and 279 each coordinate ATP. A 'KMSKS' region motif is present at residues 276–280 (KLGKS). Residues K350 and K362 each carry the N6-acetyllysine modification.

Belongs to the class-I aminoacyl-tRNA synthetase family. As to quaternary structure, homodimer.

Its subcellular location is the mitochondrion matrix. It carries out the reaction tRNA(Tyr) + L-tyrosine + ATP = L-tyrosyl-tRNA(Tyr) + AMP + diphosphate + H(+). Catalyzes the attachment of tyrosine to tRNA(Tyr) in a two-step reaction: tyrosine is first activated by ATP to form Tyr-AMP and then transferred to the acceptor end of tRNA(Tyr). This chain is Tyrosine--tRNA ligase, mitochondrial (Yars2), found in Mus musculus (Mouse).